A 133-amino-acid polypeptide reads, in one-letter code: Large ribosomal subunit protein eL14 (133 aa).

Belongs to the eukaryotic ribosomal protein eL14 family.

This chain is Large ribosomal subunit protein eL14, found in Pisum sativum (Garden pea).